We begin with the raw amino-acid sequence, 313 residues long: Olfactory receptor 5H1 (313 aa).

The Extracellular segment spans residues 1 to 28 (MEEENATLLTEFVLTGFLYQPQWKIPLF). N-linked (GlcNAc...) asparagine glycosylation is present at asparagine 5. A helical transmembrane segment spans residues 29–49 (LAFLVIYLITIMGNLGLIAVI). Residues 50 to 56 (WKDPHLH) are Cytoplasmic-facing. The chain crosses the membrane as a helical span at residues 57–77 (IPMYLLLGNLAFVDAWISSTV). Residues 78–98 (TPKMLNNFLAKSKMISLSECK) are Extracellular-facing. The cysteines at positions 97 and 179 are disulfide-linked. The helical transmembrane segment at 99-119 (IQFFSFAISVTTECFLLATMA) threads the bilayer. At 120–143 (YDRYVAICKPLLYPAIMTNGLCIR) the chain is on the cytoplasmic side. The helical transmembrane segment at 144 to 164 (LLILSYVGGILHALIHEGFLF) threads the bilayer. Over 165–195 (RLTFCNSNIVHHIYCDTIPLSKISCTDSSIN) the chain is Extracellular. The helical transmembrane segment at 196–216 (FLMVFIFSGSIQVFSIVTILV) threads the bilayer. At 217–240 (SYTFVLFAILKKKSDKGVRKAFST) the chain is on the cytoplasmic side. Residues 241-261 (CGAHLFSVSLYYGPLLFIYVG) traverse the membrane as a helical segment. Residues 262–271 (PASPQADDQD) lie on the Extracellular side of the membrane. Residues 272-292 (MVEPLFYTVIIPLLNPIIYSL) traverse the membrane as a helical segment. Residues 293-313 (RNKQVTVSFTKMLKKHVKVSY) lie on the Cytoplasmic side of the membrane.

This sequence belongs to the G-protein coupled receptor 1 family.

Its subcellular location is the cell membrane. Its function is as follows. Odorant receptor. In Homo sapiens (Human), this protein is Olfactory receptor 5H1 (OR5H1).